A 619-amino-acid polypeptide reads, in one-letter code: Protein DFG16 (619 aa).

Residue M1 is a topological domain, extracellular. Residues 2 to 22 (IIRLHFYYLLTLVYHLGLVGA) traverse the membrane as a helical segment. The Cytoplasmic portion of the chain corresponds to 23–167 (YEKAARKRIQ…KDPFPLGMIM (145 aa)). The tract at residues 33–54 (PPDLIPGPPGHKLGDERPPHYD) is disordered. A compositionally biased stretch (basic and acidic residues) spans 44 to 54 (KLGDERPPHYD). The helical transmembrane segment at 168–188 (ITFASGCICVATWMLFLVVLL) threads the bilayer. Residues 189–203 (LPSDNHNRRNKVVHV) are Extracellular-facing. Residues 204–224 (YVLFSAIIRTVFLNETIAVIF) form a helical membrane-spanning segment. The Cytoplasmic segment spans residues 225–291 (DSQYHDDYQD…IPFKMKKGTH (67 aa)). Residues 292–312 (IIITVGCFLSLADNILFANLL) form a helical membrane-spanning segment. The Extracellular portion of the chain corresponds to 313-321 (WRKNLVVLK). Residues 322-342 (VFYKLIELLIYTIFISIICYF) form a helical membrane-spanning segment. Topologically, residues 343–378 (TWHNFAYILLPKTAEINTDGKCKTKLRILWENYHET) are cytoplasmic. The helical transmembrane segment at 379-399 (IPLLAYNILIFILFYFTTIFF) threads the bilayer. Residues 400–410 (AAFTKHVRGWT) are Extracellular-facing. A helical transmembrane segment spans residues 411-431 (FNFVHLLKVLITVNVWGLIGV). Residues 432 to 619 (LEKRELHISK…NHIYNYENSD (188 aa)) are Cytoplasmic-facing. Polar residues-rich tracts occupy residues 485-504 (KSNT…SPTW) and 526-549 (KFGQ…TLSK). 2 disordered regions span residues 485–506 (KSNT…TWKS) and 520–586 (IMKS…ADKH). Over residues 552–561 (QLLRKPRRKT) the composition is skewed to basic residues.

It localises to the membrane. Functionally, involved in invasion during filamentous growth. The sequence is that of Protein DFG16 (DFG16) from Saccharomyces cerevisiae (strain ATCC 204508 / S288c) (Baker's yeast).